A 372-amino-acid polypeptide reads, in one-letter code: tRNA-specific 2-thiouridylase MnmA (372 aa).

Residues 11–18 (GMSGGVDS) and M37 contribute to the ATP site. The segment at 97 to 99 (NPD) is interaction with target base in tRNA. The active-site Nucleophile is the C102. A disulfide bond links C102 and C199. G126 provides a ligand contact to ATP. An interaction with tRNA region spans residues 149–151 (KDQ). The active-site Cysteine persulfide intermediate is the C199. Positions 309-310 (RY) are interaction with tRNA.

The protein belongs to the MnmA/TRMU family.

It localises to the cytoplasm. It carries out the reaction S-sulfanyl-L-cysteinyl-[protein] + uridine(34) in tRNA + AH2 + ATP = 2-thiouridine(34) in tRNA + L-cysteinyl-[protein] + A + AMP + diphosphate + H(+). Its function is as follows. Catalyzes the 2-thiolation of uridine at the wobble position (U34) of tRNA, leading to the formation of s(2)U34. The chain is tRNA-specific 2-thiouridylase MnmA from Staphylococcus aureus (strain MSSA476).